The chain runs to 262 residues: tRNA pseudouridine synthase A 2 (262 aa).

Asp66 serves as the catalytic Nucleophile. Tyr125 contacts substrate.

Belongs to the tRNA pseudouridine synthase TruA family. As to quaternary structure, homodimer.

The enzyme catalyses uridine(38/39/40) in tRNA = pseudouridine(38/39/40) in tRNA. In terms of biological role, formation of pseudouridine at positions 38, 39 and 40 in the anticodon stem and loop of transfer RNAs. This Protochlamydia amoebophila (strain UWE25) protein is tRNA pseudouridine synthase A 2.